We begin with the raw amino-acid sequence, 293 residues long: Methylsterol monooxygenase 1 (293 aa).

Transmembrane regions (helical) follow at residues 55–75 (LIVH…FQFI) and 100–120 (VLLF…YYFT). Positions 145–274 (CAVIEDTWHY…FTWWDRIFGT (130 aa)) constitute a Fatty acid hydroxylase domain. The Histidine box-1 motif lies at 157 to 161 (HRLLH). Residues 170-174 (HKVHH) carry the Histidine box-2 motif. The chain crosses the membrane as a helical span at residues 199–219 (FFIGIVLLCDHVILLWAWVTI). The Histidine box-3 motif lies at 249 to 255 (HHDFHHM).

This sequence belongs to the sterol desaturase family. Fe cation is required as a cofactor. Ubiquitinated by MARCHF6, leading to proteasomal degradation.

It localises to the endoplasmic reticulum membrane. It carries out the reaction 4,4-dimethyl-5alpha-cholest-7-en-3beta-ol + 6 Fe(II)-[cytochrome b5] + 3 O2 + 5 H(+) = 4alpha-carboxy-4beta-methyl-5alpha-cholest-7-ene-3beta-ol + 6 Fe(III)-[cytochrome b5] + 4 H2O. The enzyme catalyses 4,4-dimethyl-5alpha-cholesta-8,24-dien-3beta-ol + 6 Fe(II)-[cytochrome b5] + 3 O2 + 5 H(+) = 4beta-methylzymosterol-4alpha-carboxylate + 6 Fe(III)-[cytochrome b5] + 4 H2O. The catalysed reaction is 4alpha-methylzymosterol + 6 Fe(II)-[cytochrome b5] + 3 O2 + 5 H(+) = 4alpha-carboxyzymosterol + 6 Fe(III)-[cytochrome b5] + 4 H2O. It catalyses the reaction 4alpha-methyl-5alpha-cholest-7-en-3beta-ol + 6 Fe(II)-[cytochrome b5] + 3 O2 + 5 H(+) = 4alpha-carboxy-5alpha-cholest-7-en-3beta-ol + 6 Fe(III)-[cytochrome b5] + 4 H2O. It carries out the reaction 4,4-dimethyl-5alpha-cholest-8-en-3beta-ol + 6 Fe(II)-[cytochrome b5] + 3 O2 + 5 H(+) = 4alpha-carboxy-4beta-methyl-5alpha-cholest-8-en-3beta-ol + 6 Fe(III)-[cytochrome b5] + 4 H2O. The enzyme catalyses 4alpha-methyl-5alpha-cholest-8-en-3beta-ol + 6 Fe(II)-[cytochrome b5] + 3 O2 + 5 H(+) = 4alpha-carboxy-5alpha-cholest-8-ene-3beta-ol + 6 Fe(III)-[cytochrome b5] + 4 H2O. Its pathway is steroid biosynthesis; zymosterol biosynthesis; zymosterol from lanosterol: step 3/6. The protein operates within steroid biosynthesis; cholesterol biosynthesis. Its function is as follows. Catalyzes the three-step monooxygenation required for the demethylation of 4,4-dimethyl and 4alpha-methylsterols, which can be subsequently metabolized to cholesterol. This Macaca fascicularis (Crab-eating macaque) protein is Methylsterol monooxygenase 1 (MSMO1).